The sequence spans 159 residues: Ribosomal RNA large subunit methyltransferase H (159 aa).

S-adenosyl-L-methionine contacts are provided by residues Leu76, Gly108, and 127 to 132 (FSKMTF).

The protein belongs to the RNA methyltransferase RlmH family. In terms of assembly, homodimer.

Its subcellular location is the cytoplasm. It catalyses the reaction pseudouridine(1915) in 23S rRNA + S-adenosyl-L-methionine = N(3)-methylpseudouridine(1915) in 23S rRNA + S-adenosyl-L-homocysteine + H(+). Functionally, specifically methylates the pseudouridine at position 1915 (m3Psi1915) in 23S rRNA. This Bifidobacterium animalis subsp. lactis (strain AD011) protein is Ribosomal RNA large subunit methyltransferase H.